A 514-amino-acid polypeptide reads, in one-letter code: Cytochrome P450 monooxygenase ptmQ (514 aa).

The chain crosses the membrane as a helical span at residues 3–23 (YVAQSPWIATLIVTATTYCTL). Residue Asn-148 is glycosylated (N-linked (GlcNAc...) asparagine). Cys-452 contacts heme. Asn-486 is a glycosylation site (N-linked (GlcNAc...) asparagine).

It belongs to the cytochrome P450 family. It depends on heme as a cofactor.

The protein resides in the membrane. Its pathway is secondary metabolite biosynthesis. Its function is as follows. Cytochrome P450 monooxygenase; part of the gene cluster that mediates the biosynthesis of the indole diterpenes penitrems. The geranylgeranyl diphosphate (GGPP) synthase ptmG catalyzes the first step in penitrem biosynthesis via conversion of farnesyl pyrophosphate and isopentyl pyrophosphate into geranylgeranyl pyrophosphate (GGPP). Condensation of indole-3-glycerol phosphate with GGPP by the prenyl transferase ptmC then forms 3-geranylgeranylindole (3-GGI). Epoxidation by the FAD-dependent monooxygenase ptmM leads to a epoxidized-GGI that is substrate of the terpene cyclase ptmB for cyclization to yield paspaline. Paspaline is subsequently converted to 13-desoxypaxilline by the cytochrome P450 monooxygenase ptmP, the latter being then converted to paxilline by the cytochrome P450 monooxygenase ptmQ. Paxilline is converted to beta-paxitriol via C-10 ketoreduction by the short-chain dehydrogenase ptmH which can be monoprenylated at the C-20 by the indole diterpene prenyltransferase ptmD. A two-step elimination (acetylation and elimination) process performed by the O-acetyltransferase ptmV and ptmI leads to the production of the prenylated form of penijanthine. The FAD-linked oxidoreductase ptmO then converts the prenylated form of penijanthine into PC-M5 which is in turn transformed into PC-M4 by the aromatic dimethylallyltransferase ptmE. Five sequential oxidative transformations performed by the cytochrome P450 monooxygenases ptmK, ptmU, ptmL, ptmN and ptmJ yield the various penitrem compounds. PtmK, ptmU and ptmM are involved in the formation of the key bicyclic ring of penitrem C via the formation of the intermediates secopenitrem D and penitrem D. PtmL catalyzes the epoxidation of penitrem D and C to yield penitrem B and F, respectively. PtmJ catalyzes the last benzylic hydroxylation to convert penitrem B to prenitrem E and penitrem F to penitrem A. The polypeptide is Cytochrome P450 monooxygenase ptmQ (Penicillium ochrochloron).